Reading from the N-terminus, the 467-residue chain is UDP-N-acetylmuramate--L-alanine ligase (467 aa).

Position 112 to 118 (112 to 118 (GTHGKTT)) interacts with ATP.

This sequence belongs to the MurCDEF family.

The protein resides in the cytoplasm. It carries out the reaction UDP-N-acetyl-alpha-D-muramate + L-alanine + ATP = UDP-N-acetyl-alpha-D-muramoyl-L-alanine + ADP + phosphate + H(+). The protein operates within cell wall biogenesis; peptidoglycan biosynthesis. In terms of biological role, cell wall formation. This chain is UDP-N-acetylmuramate--L-alanine ligase, found in Paraburkholderia phytofirmans (strain DSM 17436 / LMG 22146 / PsJN) (Burkholderia phytofirmans).